The chain runs to 142 residues: Large ribosomal subunit protein uL16 (142 aa).

Belongs to the universal ribosomal protein uL16 family. Part of the 50S ribosomal subunit.

In terms of biological role, binds 23S rRNA and is also seen to make contacts with the A and possibly P site tRNAs. The protein is Large ribosomal subunit protein uL16 of Phenylobacterium zucineum (strain HLK1).